The chain runs to 388 residues: Chorismate synthase (388 aa).

Residues Arg39 and Arg45 each contribute to the NADP(+) site. FMN is bound by residues 132–134, 251–252, Gly296, 311–315, and Arg337; these read RSS, NA, and KPIPT.

Belongs to the chorismate synthase family. Homotetramer. FMNH2 is required as a cofactor.

The catalysed reaction is 5-O-(1-carboxyvinyl)-3-phosphoshikimate = chorismate + phosphate. It functions in the pathway metabolic intermediate biosynthesis; chorismate biosynthesis; chorismate from D-erythrose 4-phosphate and phosphoenolpyruvate: step 7/7. Its function is as follows. Catalyzes the anti-1,4-elimination of the C-3 phosphate and the C-6 proR hydrogen from 5-enolpyruvylshikimate-3-phosphate (EPSP) to yield chorismate, which is the branch point compound that serves as the starting substrate for the three terminal pathways of aromatic amino acid biosynthesis. This reaction introduces a second double bond into the aromatic ring system. In Staphylococcus carnosus (strain TM300), this protein is Chorismate synthase.